Here is a 384-residue protein sequence, read N- to C-terminus: Probable E3 ubiquitin-protein ligase rnf113 (384 aa).

Positions 1 to 11 are enriched in basic residues; sequence MDLFRKPKKRN. The tract at residues 1-96 is disordered; the sequence is MDLFRKPKKR…GPSGPRDQGA (96 aa). Positions 42-52 are enriched in polar residues; it reads PMVQSTKQLDA. Positions 60 to 71 are enriched in acidic residues; it reads SSDDSDDSDDNQ. The segment at 175 to 203 adopts a C3H1-type zinc-finger fold; sequence DFAPDICKDYKETGFCTFGDSCKFVHDRS. The segment at 241–279 adopts an RING-type zinc-finger fold; sequence CFICGNPFVDPIVTKCKHYFCTGCALKSFQKSSKCPICQ. A disordered region spans residues 299–384; sequence KKQQQKQEAE…ESDDDDAEKD (86 aa). 2 stretches are compositionally biased toward basic and acidic residues: residues 303 to 312 and 320 to 334; these read QKQEAEKQEE and EKPHECDDHHHHDHE. Over residues 351–384 the composition is skewed to acidic residues; the sequence is EKSDEEQEIMMEDVEGLEGGENDSESDDDDAEKD.

The enzyme catalyses S-ubiquitinyl-[E2 ubiquitin-conjugating enzyme]-L-cysteine + [acceptor protein]-L-lysine = [E2 ubiquitin-conjugating enzyme]-L-cysteine + N(6)-ubiquitinyl-[acceptor protein]-L-lysine.. It functions in the pathway protein modification; protein ubiquitination. In terms of biological role, may function as E3 ubiquitin-protein ligase that catalyzes the transfer of ubiquitin onto target proteins. May play a role in DNA repair via its role in the synthesis of 'Lys-63'-linked polyubiquitin chains that recruit proteins involved in repair to sites of DNA damage by alkylating agents. The protein is Probable E3 ubiquitin-protein ligase rnf113 (rnf-113) of Caenorhabditis elegans.